The sequence spans 335 residues: Abasic site processing protein HMCES (335 aa).

Cysteine 2 functions as the Nucleophile in the catalytic mechanism. Cysteine 2 bears the Thiazolidine linkage to a ring-opened DNA abasic site mark. The span at 24-39 (QGGRKWPNWRDGDSDK) shows a compositional bias: basic and acidic residues. The tract at residues 24-51 (QGGRKWPNWRDGDSDKYQPSYNKSPQSN) is disordered. Residues 40-51 (YQPSYNKSPQSN) are compositionally biased toward polar residues. The active site involves glutamate 129. The tract at residues 284-335 (LQNKSPKKEESHSIQSPKLSQFGAPPKKTSAGLMQQWLKKEDGEPSPKRAKK) is disordered. Over residues 321–335 (LKKEDGEPSPKRAKK) the composition is skewed to basic and acidic residues.

Belongs to the SOS response-associated peptidase family. Ubiquitination of the hmces DNA-protein cross-link by rfwd3 may promotes its degradation.

The protein resides in the chromosome. Its activity is regulated as follows. Formation and reversal of DNA-protein cross-link depends on DNA context. Catalyzes formation of the thiazolidine linkage in presence of abasic sites in single-stranded DNA. Mediates the reversal of the thiazolidine cross-link in presence of double stranded DNA. Sensor of abasic sites in single-stranded DNA (ssDNA) required to preserve genome integrity by promoting error-free repair of abasic sites. Acts as an enzyme that recognizes and binds abasic sites in ssDNA at replication forks and chemically modifies the lesion by forming a covalent cross-link with DNA: forms a stable thiazolidine linkage between a ring-opened abasic site and the alpha-amino and sulfhydryl substituents of its N-terminal catalytic cysteine residue. The hmces DNA-protein cross-link is then either reversed or degraded. Hmces is able to catalyze the reversal of its thiazolidine cross-link and cycle between a cross-link and a non-cross-linked state depending on DNA context: mediates self-reversal of the thiazolidine cross-link in double stranded DNA, allowing apex1 to initiate downstream repair of abasic sites. The hmces DNA-protein cross-link can also be degraded by the sprtn metalloprotease following unfolding by the brip1/fancj helicase. Promotes error-free repair of abasic sites by protecting abasic sites from translesion synthesis (TLS) polymerases and endonucleases that are error-prone and would generate mutations and double-strand breaks. Acts as a protease: mediates autocatalytic processing of its N-terminal methionine in order to expose the catalytic cysteine. The hmces DNA-protein cross-link is then either reversed or degraded. According to a model, the HMCES DNA-protein cross-link. This is Abasic site processing protein HMCES from Xenopus tropicalis (Western clawed frog).